Here is a 471-residue protein sequence, read N- to C-terminus: Probable multidrug-efflux transporter MT1670 (471 aa).

14 helical membrane-spanning segments follow: residues 23–43, 55–75, 91–111, 116–136, 146–166, 174–194, 213–233, 237–257, 279–299, 308–328, 337–357, 366–386, 410–430, and 438–458; these read IVLA…ISLL, LYAW…TTVN, LAVF…QILV, LQGI…NSTL, ALVS…GGLF, WAFG…PVAL, VPVW…VAAL, LVQT…FVVV, IYLT…VPLF, PVAA…GEVA, VIGH…ALGA, VGII…IGIA, AINV…GVVV, and VAAA…GVIA.

It belongs to the major facilitator superfamily.

The protein resides in the cell membrane. Could be involved in fluoroquinolones efflux. In Mycobacterium tuberculosis (strain CDC 1551 / Oshkosh), this protein is Probable multidrug-efflux transporter MT1670.